The following is a 122-amino-acid chain: Large ribosomal subunit protein uL14 (122 aa).

Belongs to the universal ribosomal protein uL14 family. Part of the 50S ribosomal subunit. Forms a cluster with proteins L3 and L19. In the 70S ribosome, L14 and L19 interact and together make contacts with the 16S rRNA in bridges B5 and B8.

In terms of biological role, binds to 23S rRNA. Forms part of two intersubunit bridges in the 70S ribosome. In Mycolicibacterium gilvum (strain PYR-GCK) (Mycobacterium gilvum (strain PYR-GCK)), this protein is Large ribosomal subunit protein uL14.